We begin with the raw amino-acid sequence, 1019 residues long: Probable inorganic carbon transporter subunit DabA 1 (1019 aa).

C491 and D493 together coordinate Zn(2+). A disordered region spans residues 624-643; the sequence is VPTRLHSPRDEGSAAGGEGQ. Zn(2+)-binding residues include H676 and C691.

It belongs to the inorganic carbon transporter (TC 9.A.2) DabA family. In terms of assembly, forms a complex with DabB. It depends on Zn(2+) as a cofactor.

The protein localises to the cell inner membrane. Part of an energy-coupled inorganic carbon pump. This Sorangium cellulosum (strain So ce56) (Polyangium cellulosum (strain So ce56)) protein is Probable inorganic carbon transporter subunit DabA 1.